We begin with the raw amino-acid sequence, 149 residues long: MLQPKRVKFRKVQRGRRDGAAHKGNTVAFGEFALQSLEAGWITARQIEATRRAITRYIRRGGQVWIRIFPDKPITKKPAETRQGGGKGAPEEWVAVVRRGRIMFEIGGVTPEAAKEAMRLASYKMPVKTRFVARDIPVVAGETEVEEAE.

This sequence belongs to the universal ribosomal protein uL16 family. Part of the 50S ribosomal subunit.

Functionally, binds 23S rRNA and is also seen to make contacts with the A and possibly P site tRNAs. In Dehalococcoides mccartyi (strain ATCC BAA-2100 / JCM 16839 / KCTC 5957 / BAV1), this protein is Large ribosomal subunit protein uL16.